We begin with the raw amino-acid sequence, 233 residues long: Octanoyltransferase (233 aa).

Residues 34–214 form the BPL/LPL catalytic domain; sequence GQAPSTVLLL…EFSAREATLI (181 aa). Residues 72–79, 144–146, and 157–159 each bind substrate; these read RGGKLTWH, AIG, and GFS. The active-site Acyl-thioester intermediate is C175.

It belongs to the LipB family.

It localises to the cytoplasm. The catalysed reaction is octanoyl-[ACP] + L-lysyl-[protein] = N(6)-octanoyl-L-lysyl-[protein] + holo-[ACP] + H(+). It participates in protein modification; protein lipoylation via endogenous pathway; protein N(6)-(lipoyl)lysine from octanoyl-[acyl-carrier-protein]: step 1/2. Catalyzes the transfer of endogenously produced octanoic acid from octanoyl-acyl-carrier-protein onto the lipoyl domains of lipoate-dependent enzymes. Lipoyl-ACP can also act as a substrate although octanoyl-ACP is likely to be the physiological substrate. This is Octanoyltransferase from Renibacterium salmoninarum (strain ATCC 33209 / DSM 20767 / JCM 11484 / NBRC 15589 / NCIMB 2235).